The sequence spans 265 residues: Type III pantothenate kinase (265 aa).

6–13 (DVGNTHTV) serves as a coordination point for ATP. 112–115 (GADR) serves as a coordination point for substrate. Asp114 serves as the catalytic Proton acceptor. Residue Asp134 coordinates K(+). Thr137 is an ATP binding site. A substrate-binding site is contributed by Thr189.

This sequence belongs to the type III pantothenate kinase family. As to quaternary structure, homodimer. NH4(+) is required as a cofactor. K(+) serves as cofactor.

It is found in the cytoplasm. It catalyses the reaction (R)-pantothenate + ATP = (R)-4'-phosphopantothenate + ADP + H(+). It functions in the pathway cofactor biosynthesis; coenzyme A biosynthesis; CoA from (R)-pantothenate: step 1/5. Its function is as follows. Catalyzes the phosphorylation of pantothenate (Pan), the first step in CoA biosynthesis. The sequence is that of Type III pantothenate kinase from Streptomyces avermitilis (strain ATCC 31267 / DSM 46492 / JCM 5070 / NBRC 14893 / NCIMB 12804 / NRRL 8165 / MA-4680).